A 359-amino-acid chain; its full sequence is Agropine synthesis conjugase (359 aa).

Positions 28–171 constitute an SIS domain; sequence TVAKFGRATA…IGGILNEREN (144 aa).

The chain is Agropine synthesis conjugase (mas2) from Rhizobium rhizogenes (Agrobacterium rhizogenes).